Consider the following 101-residue polypeptide: Small ribosomal subunit protein uS14 (101 aa).

This sequence belongs to the universal ribosomal protein uS14 family. In terms of assembly, part of the 30S ribosomal subunit. Contacts proteins S3 and S10.

Functionally, binds 16S rRNA, required for the assembly of 30S particles and may also be responsible for determining the conformation of the 16S rRNA at the A site. This Enterobacter sp. (strain 638) protein is Small ribosomal subunit protein uS14.